The primary structure comprises 667 residues: Probable potassium transport system protein Kup (667 aa).

A run of 12 helical transmembrane segments spans residues 16–36 (GFII…LYTM), 58–78 (VSLI…LIAL), 101–121 (WLII…ALTP), 146–166 (TNVI…QRFG), 167–187 (TGVI…VLGI), 221–241 (IFIL…YSDL), 253–273 (WPFV…WILA), 294–314 (VYLV…LISG), 343–363 (LYIP…VLYF), 373–393 (YGLA…YYLI), 399–419 (PLLA…FFLA), and 431–451 (VVVL…GTVI).

It belongs to the HAK/KUP transporter (TC 2.A.72) family.

It localises to the cell membrane. The catalysed reaction is K(+)(in) + H(+)(in) = K(+)(out) + H(+)(out). Functionally, transport of potassium into the cell. Likely operates as a K(+):H(+) symporter. This is Probable potassium transport system protein Kup from Streptococcus equi subsp. zooepidemicus (strain H70).